We begin with the raw amino-acid sequence, 127 residues long: Secreted RxLR effector protein 3 (127 aa).

Positions methionine 1–alanine 20 are cleaved as a signal peptide. Residues arginine 30–arginine 48 carry the RxLR-dEER motif.

The protein belongs to the RxLR effector family.

It localises to the secreted. It is found in the host cell. Its function is as follows. Secreted effector that partially suppresses elicitor-induced cell death in host and enhances virulence of P.parasitica. This chain is Secreted RxLR effector protein 3, found in Phytophthora nicotianae (Potato buckeye rot agent).